A 528-amino-acid polypeptide reads, in one-letter code: Bifunctional purine biosynthesis protein PurH (528 aa).

In terms of domain architecture, MGS-like spans 1-146 (MAPTALLSVS…KNHDHVAVLT (146 aa)).

It belongs to the PurH family.

It carries out the reaction (6R)-10-formyltetrahydrofolate + 5-amino-1-(5-phospho-beta-D-ribosyl)imidazole-4-carboxamide = 5-formamido-1-(5-phospho-D-ribosyl)imidazole-4-carboxamide + (6S)-5,6,7,8-tetrahydrofolate. It catalyses the reaction IMP + H2O = 5-formamido-1-(5-phospho-D-ribosyl)imidazole-4-carboxamide. It functions in the pathway purine metabolism; IMP biosynthesis via de novo pathway; 5-formamido-1-(5-phospho-D-ribosyl)imidazole-4-carboxamide from 5-amino-1-(5-phospho-D-ribosyl)imidazole-4-carboxamide (10-formyl THF route): step 1/1. Its pathway is purine metabolism; IMP biosynthesis via de novo pathway; IMP from 5-formamido-1-(5-phospho-D-ribosyl)imidazole-4-carboxamide: step 1/1. The sequence is that of Bifunctional purine biosynthesis protein PurH from Synechococcus sp. (strain WH7803).